The following is a 238-amino-acid chain: MTWDGLPTQPLLMLLMLLFAAGSGSALAGCPGCGAGMQTGCRGGCVEEEDAGSPADGCTEAGGCLRREGQPCGVYSPKCAPGLQCQPRENEEAPLRALLIGQGRCQRARGPSEETTKESKPQGGASRSRDTNHRDRQKNPRTSAAPIRPNPVQDSEMGPCRRHLDSVLQQLQTEVFRGGARGLYVPNCDLRGFYRKQQCRSSQGNRRGPCWCVDPMGQPLPVSPDGQGSTQCSARSSG.

The N-terminal stretch at 1–25 is a signal peptide; it reads MTWDGLPTQPLLMLLMLLFAAGSGS. The region spanning 26 to 108 is the IGFBP N-terminal domain; the sequence is ALAGCPGCGA…LIGQGRCQRA (83 aa). Disulfide bonds link C30/C33, C41/C45, C58/C64, C72/C85, and C79/C105. The interval 104–159 is disordered; the sequence is RCQRARGPSEETTKESKPQGGASRSRDTNHRDRQKNPRTSAAPIRPNPVQDSEMGP. Composition is skewed to basic and acidic residues over residues 110 to 120 and 127 to 138; these read GPSEETTKESK and RSRDTNHRDRQK. Residues 157–232 form the Thyroglobulin type-1 domain; it reads MGPCRRHLDS…SPDGQGSTQC (76 aa). 3 disulfide bridges follow: C160–C188, C199–C210, and C212–C232. A disordered region spans residues 218 to 238; sequence QPLPVSPDGQGSTQCSARSSG. Over residues 226–238 the composition is skewed to polar residues; the sequence is GQGSTQCSARSSG.

As to quaternary structure, interacts (via C-terminal domain) with PHB2. O-glycosylated.

Its subcellular location is the secreted. Functionally, IGF-binding proteins prolong the half-life of the IGFs and have been shown to either inhibit or stimulate the growth promoting effects of the IGFs on cell culture. They alter the interaction of IGFs with their cell surface receptors. Activates the MAPK signaling pathway and induces cell migration. The sequence is that of Insulin-like growth factor-binding protein 6 (Igfbp6) from Mus musculus (Mouse).